A 325-amino-acid polypeptide reads, in one-letter code: Serpentine receptor class gamma-16 (325 aa).

Helical transmembrane passes span 25-45, 65-85, 87-107, 144-164, 187-207, 232-252, and 264-284; these read FCLY…ILLI, VVSL…MFIP, LCPL…MYYW, LAVT…WNLL, WASL…FTII, FVSL…LIFV, and LLFQ…IIML.

Belongs to the nematode receptor-like protein srg family.

It is found in the membrane. This Caenorhabditis elegans protein is Serpentine receptor class gamma-16 (srg-16).